The sequence spans 361 residues: Chorismate synthase (361 aa).

Positions 37–59 are disordered; sequence TEEDLQHDLDRRRPGTSRYTTPR. Over residues 40–49 the composition is skewed to basic and acidic residues; the sequence is DLQHDLDRRR. 2 residues coordinate NADP(+): Arg48 and Arg54. FMN-binding positions include 125–127, 238–239, Gly278, 293–297, and Arg319; these read RSS, NA, and KPTSS.

It belongs to the chorismate synthase family. As to quaternary structure, homotetramer. It depends on FMNH2 as a cofactor.

It carries out the reaction 5-O-(1-carboxyvinyl)-3-phosphoshikimate = chorismate + phosphate. It participates in metabolic intermediate biosynthesis; chorismate biosynthesis; chorismate from D-erythrose 4-phosphate and phosphoenolpyruvate: step 7/7. Functionally, catalyzes the anti-1,4-elimination of the C-3 phosphate and the C-6 proR hydrogen from 5-enolpyruvylshikimate-3-phosphate (EPSP) to yield chorismate, which is the branch point compound that serves as the starting substrate for the three terminal pathways of aromatic amino acid biosynthesis. This reaction introduces a second double bond into the aromatic ring system. This Erwinia tasmaniensis (strain DSM 17950 / CFBP 7177 / CIP 109463 / NCPPB 4357 / Et1/99) protein is Chorismate synthase.